The chain runs to 367 residues: Histidinol-phosphate aminotransferase (367 aa).

An N6-(pyridoxal phosphate)lysine modification is found at Lys226.

It belongs to the class-II pyridoxal-phosphate-dependent aminotransferase family. Histidinol-phosphate aminotransferase subfamily. Homodimer. It depends on pyridoxal 5'-phosphate as a cofactor.

The enzyme catalyses L-histidinol phosphate + 2-oxoglutarate = 3-(imidazol-4-yl)-2-oxopropyl phosphate + L-glutamate. The protein operates within amino-acid biosynthesis; L-histidine biosynthesis; L-histidine from 5-phospho-alpha-D-ribose 1-diphosphate: step 7/9. The protein is Histidinol-phosphate aminotransferase of Wolinella succinogenes (strain ATCC 29543 / DSM 1740 / CCUG 13145 / JCM 31913 / LMG 7466 / NCTC 11488 / FDC 602W) (Vibrio succinogenes).